Reading from the N-terminus, the 601-residue chain is Glutathione-regulated potassium-efflux system protein KefB (601 aa).

The next 13 helical transmembrane spans lie at 4–24, 29–49, 55–75, 87–107, 111–131, 152–172, 177–197, 207–227, 230–250, 262–282, 284–304, 324–344, and 356–376; these read ADLL…VPLA, IGAV…GLGF, EILH…GLEL, IFGV…GLLM, FLWQ…TAMA, VLLF…LLAG, HFDW…LIGG, FIAA…LVLS, LFMD…GVLL, AIDP…GMSL, LGVL…LVVI, MQFA…FSTA, and ALLL…MKGI. The RCK N-terminal domain occupies 400 to 519; the sequence is KPQVIVVGFG…AGVTQFSRET (120 aa).

It belongs to the monovalent cation:proton antiporter 2 (CPA2) transporter (TC 2.A.37) family. KefB subfamily. In terms of assembly, interacts with the regulatory subunit KefG.

Its subcellular location is the cell inner membrane. Pore-forming subunit of a potassium efflux system that confers protection against electrophiles. Catalyzes K(+)/H(+) antiport. This is Glutathione-regulated potassium-efflux system protein KefB from Salmonella paratyphi A (strain ATCC 9150 / SARB42).